Consider the following 156-residue polypeptide: MGVFAFEDEHPSAVAQAKLFKALTKDSDDIIPKVIEQIQSVEIVEGNGGPGTVKKITASHGGHTSYVLHKIDAIDEASFEYNYSIVGGTGLDESLEKITFESKLLSGPDGGSIGKIKVKFHTKGDVLSDAVREEAKARGTGLFKAVEGYVLANPNY.

Trans-zeatin contacts are provided by Asp8 and Asp28. Ca(2+)-binding residues include Pro32 and Ile38. Trans-zeatin is bound by residues Lys54, Glu133, and Lys136.

The protein belongs to the BetVI family. Ubiquitous, with higher levels in roots.

It is found in the cytoplasm. The protein localises to the cytosol. Functionally, class II ribonuclease (RNase), with low activity on single-strand RNA. Binds to cytokinins. Interacts with melatonin. The chain is Protein LlR18B (LLR18B) from Lupinus luteus (European yellow lupine).